A 273-amino-acid chain; its full sequence is Urease accessory protein UreD (273 aa).

Belongs to the UreD family. In terms of assembly, ureD, UreF and UreG form a complex that acts as a GTP-hydrolysis-dependent molecular chaperone, activating the urease apoprotein by helping to assemble the nickel containing metallocenter of UreC. The UreE protein probably delivers the nickel.

The protein localises to the cytoplasm. Required for maturation of urease via the functional incorporation of the urease nickel metallocenter. This Rhizobium leguminosarum bv. viciae protein is Urease accessory protein UreD.